The chain runs to 219 residues: N-(5'-phosphoribosyl)anthranilate isomerase (219 aa).

It belongs to the TrpF family.

It carries out the reaction N-(5-phospho-beta-D-ribosyl)anthranilate = 1-(2-carboxyphenylamino)-1-deoxy-D-ribulose 5-phosphate. The protein operates within amino-acid biosynthesis; L-tryptophan biosynthesis; L-tryptophan from chorismate: step 3/5. In Bordetella avium (strain 197N), this protein is N-(5'-phosphoribosyl)anthranilate isomerase.